The sequence spans 65 residues: LTCVKEKSIFGVTTEDCPDGQNLCFKRWHMIVPGRYKKTRGCAATCPIAENRDVIECCSTDKCNL.

4 disulfides stabilise this stretch: C3–C24, C17–C42, C46–C57, and C58–C63.

This sequence belongs to the three-finger toxin family. Short-chain subfamily. Type C muscarinic toxin sub-subfamily. As to quaternary structure, monomer. In terms of tissue distribution, expressed by the venom gland.

Its subcellular location is the secreted. The protein is Muscarinic toxin-like protein 2 of Naja kaouthia (Monocled cobra).